A 229-amino-acid polypeptide reads, in one-letter code: Large ribosomal subunit protein uL1 (229 aa).

This sequence belongs to the universal ribosomal protein uL1 family. Part of the 50S ribosomal subunit.

Functionally, binds directly to 23S rRNA. The L1 stalk is quite mobile in the ribosome, and is involved in E site tRNA release. In terms of biological role, protein L1 is also a translational repressor protein, it controls the translation of the L11 operon by binding to its mRNA. The sequence is that of Large ribosomal subunit protein uL1 from Lactiplantibacillus plantarum (strain ATCC BAA-793 / NCIMB 8826 / WCFS1) (Lactobacillus plantarum).